The following is a 484-amino-acid chain: MSQSDSQPFDLLLAGGTLIDGSNTPGRRADLGVRGDRIAAIGDLSDAAAHTRVDVSGLVVAPGFIDSHTHDDNYLLRRRDMTPKISQGVTTVVTGNCGISLAPLAHANPPAPLDLLDEGGSYRFERFADYLDALRATPAAVNAACMVGHSTLRAAVMPDLQRAATDEEIAAMRDLAEEAMASGAIGISTGAFYPPAARATTEEIIEVCRPLSAHGGIYATHMRDEGEHIVAALEETFRIGRELDVPVVISHHKVMGQPNFGRSRETLPLIEAAMARQDVSLDAYPYVAGSTMLKQDRVLLAGRTIITWCKPFPELSGRDLDEVAAERGKSKYDVVPELQPAGAIYFMMDEPDVQRILAFGPTMIGSDGLPHDERPHPRLWGTFPRVLGHYARDLGLFPLETAVWKMTGLTAARFGLAGRGQLQAGYFADLVVFDPATVADTATFEHPTERAAGIHSVYVNGAPVWQEQAFTGQHAGRVLARTAA.

The protein belongs to the metallo-dependent hydrolases superfamily. N-acyl-D-amino-acid deacylase family. Zn(2+) serves as cofactor.

Its subcellular location is the cytoplasm. The catalysed reaction is an N-acyl-D-amino acid + H2O = a D-alpha-amino acid + a carboxylate. Has a wide specificity; hydrolyzes N-acyl derivative of neutral D-amino acids. This Alcaligenes xylosoxydans xylosoxydans (Achromobacter xylosoxidans) protein is D-aminoacylase (dan).